Reading from the N-terminus, the 212-residue chain is Imidazole glycerol phosphate synthase subunit HisH (212 aa).

A Glutamine amidotransferase type-1 domain is found at 3-212; that stretch reads TVAVIDYGMG…QNFAAWDGRW (210 aa). The Nucleophile role is filled by C81. Residues H190 and E192 contribute to the active site.

Heterodimer of HisH and HisF.

The protein resides in the cytoplasm. It carries out the reaction 5-[(5-phospho-1-deoxy-D-ribulos-1-ylimino)methylamino]-1-(5-phospho-beta-D-ribosyl)imidazole-4-carboxamide + L-glutamine = D-erythro-1-(imidazol-4-yl)glycerol 3-phosphate + 5-amino-1-(5-phospho-beta-D-ribosyl)imidazole-4-carboxamide + L-glutamate + H(+). It catalyses the reaction L-glutamine + H2O = L-glutamate + NH4(+). Its pathway is amino-acid biosynthesis; L-histidine biosynthesis; L-histidine from 5-phospho-alpha-D-ribose 1-diphosphate: step 5/9. Its function is as follows. IGPS catalyzes the conversion of PRFAR and glutamine to IGP, AICAR and glutamate. The HisH subunit catalyzes the hydrolysis of glutamine to glutamate and ammonia as part of the synthesis of IGP and AICAR. The resulting ammonia molecule is channeled to the active site of HisF. This Pseudomonas syringae pv. syringae (strain B728a) protein is Imidazole glycerol phosphate synthase subunit HisH.